We begin with the raw amino-acid sequence, 367 residues long: 7,8-didemethyl-8-hydroxy-5-deazariboflavin synthase (367 aa).

Residues 39-275 (LTFARNVFVP…AEVGVQVPPN (237 aa)) form the Radical SAM core domain. The [4Fe-4S] cluster site is built by C53, C57, and C60.

Belongs to the radical SAM superfamily. CofG family. As to quaternary structure, consists of two subunits, CofG and CofH. [4Fe-4S] cluster serves as cofactor.

The catalysed reaction is 5-amino-5-(4-hydroxybenzyl)-6-(D-ribitylimino)-5,6-dihydrouracil + S-adenosyl-L-methionine = 7,8-didemethyl-8-hydroxy-5-deazariboflavin + 5'-deoxyadenosine + L-methionine + NH4(+) + H(+). It participates in cofactor biosynthesis; coenzyme F0 biosynthesis. Functionally, catalyzes the radical-mediated synthesis of 7,8-didemethyl-8-hydroxy-5-deazariboflavin from 5-amino-5-(4-hydroxybenzyl)-6-(D-ribitylimino)-5,6-dihydrouracil. The protein is 7,8-didemethyl-8-hydroxy-5-deazariboflavin synthase of Halobacterium salinarum (strain ATCC 29341 / DSM 671 / R1).